Reading from the N-terminus, the 85-residue chain is Small ribosomal subunit protein bS20 (85 aa).

Positions 1-24 are disordered; that stretch reads MANIKSAIKRAKLSEERRSHNASI.

The protein belongs to the bacterial ribosomal protein bS20 family.

Functionally, binds directly to 16S ribosomal RNA. The sequence is that of Small ribosomal subunit protein bS20 from Bacillus mycoides (strain KBAB4) (Bacillus weihenstephanensis).